Here is a 219-residue protein sequence, read N- to C-terminus: Probable nicotinate-nucleotide adenylyltransferase (219 aa).

This sequence belongs to the NadD family.

The enzyme catalyses nicotinate beta-D-ribonucleotide + ATP + H(+) = deamido-NAD(+) + diphosphate. It participates in cofactor biosynthesis; NAD(+) biosynthesis; deamido-NAD(+) from nicotinate D-ribonucleotide: step 1/1. Catalyzes the reversible adenylation of nicotinate mononucleotide (NaMN) to nicotinic acid adenine dinucleotide (NaAD). This is Probable nicotinate-nucleotide adenylyltransferase from Pseudoalteromonas atlantica (strain T6c / ATCC BAA-1087).